The sequence spans 27 residues: Cupiennin-4b (27 aa).

The residue at position 27 (Q27) is a Glutamine amide.

Expressed by the venom gland.

It localises to the secreted. This is Cupiennin-4b from Cupiennius salei (American wandering spider).